The chain runs to 79 residues: Sulfur carrier protein TusA (79 aa).

Cys17 serves as the catalytic Cysteine persulfide intermediate.

It belongs to the sulfur carrier protein TusA family.

Its subcellular location is the cytoplasm. In terms of biological role, sulfur carrier protein which probably makes part of a sulfur-relay system. The chain is Sulfur carrier protein TusA from Actinobacillus pleuropneumoniae serotype 5b (strain L20).